Here is a 145-residue protein sequence, read N- to C-terminus: Anaerobic nitrite reductase NSHB5 (145 aa).

The Globin domain maps to 2–142; that stretch reads GFSETQEELV…LAAAIKEEMK (141 aa). The Homodimerization signature appears at 35–39; the sequence is EIAPA. Heme b contacts are provided by S45, H59, K61, R84, T88, and H89. The short motif at 96-108 is the Homodimerization element; that stretch reads DAYFEVVKTALLD.

It belongs to the plant globin family. In terms of assembly, homodimer. It depends on heme b as a cofactor. Expressed in embryonic (embryos, coleoptiles and seminal roots) and vegetative (leaves and roots) organs.

The protein localises to the cytoplasm. The protein resides in the nucleus. It carries out the reaction Fe(III)-heme b-[protein] + nitric oxide + H2O = Fe(II)-heme b-[protein] + nitrite + 2 H(+). Functionally, phytoglobin that reduces nitrite to nitric oxide under anoxic conditions (e.g. during flooding or in waterlogged soil). May not function as an oxygen storage or transport protein. Has an unusually high affinity for O(2) through an hexacoordinate heme iron because of a very low dissociation constant. The polypeptide is Anaerobic nitrite reductase NSHB5 (Oryza sativa subsp. japonica (Rice)).